The sequence spans 683 residues: Tripartite terminase subunit 3 (683 aa).

The Walker A motif motif lies at I217–T224. Positions L312–E317 match the Walker B motif motif. E317 (for ATPase activity) is an active-site residue. Catalysis depends on for nuclease activity residues D472, E546, and D658.

This sequence belongs to the herpesviridae TRM3 protein family. In terms of assembly, interacts with the terminase subunits TRM1 and TRM2. Interacts with portal protein.

The protein resides in the host nucleus. In terms of biological role, component of the molecular motor that translocates viral genomic DNA in empty capsid during DNA packaging. Forms a tripartite terminase complex together with TRM1 and TRM2 in the host cytoplasm. Once the complex reaches the host nucleus, it interacts with the capsid portal vertex. This portal forms a ring in which genomic DNA is translocated into the capsid. TRM3 carries an RNase H-like nuclease activity that plays an important role for the cleavage of concatemeric viral DNA into unit length genomes. The polypeptide is Tripartite terminase subunit 3 (Saimiri sciureus (Common squirrel monkey)).